The sequence spans 353 residues: Chorismate synthase (353 aa).

The NADP(+) site is built by Arg48 and Arg54. FMN is bound by residues 125 to 127 (RSS), 238 to 239 (NA), Gly278, 293 to 297 (KPTSS), and Arg319.

Belongs to the chorismate synthase family. As to quaternary structure, homotetramer. The cofactor is FMNH2.

The catalysed reaction is 5-O-(1-carboxyvinyl)-3-phosphoshikimate = chorismate + phosphate. It functions in the pathway metabolic intermediate biosynthesis; chorismate biosynthesis; chorismate from D-erythrose 4-phosphate and phosphoenolpyruvate: step 7/7. Functionally, catalyzes the anti-1,4-elimination of the C-3 phosphate and the C-6 proR hydrogen from 5-enolpyruvylshikimate-3-phosphate (EPSP) to yield chorismate, which is the branch point compound that serves as the starting substrate for the three terminal pathways of aromatic amino acid biosynthesis. This reaction introduces a second double bond into the aromatic ring system. This is Chorismate synthase from Bordetella parapertussis (strain 12822 / ATCC BAA-587 / NCTC 13253).